Here is a 215-residue protein sequence, read N- to C-terminus: FMN-dependent NADH:quinone oxidoreductase (215 aa).

17–19 contributes to the FMN binding site; that stretch reads SAS.

This sequence belongs to the azoreductase type 1 family. In terms of assembly, homodimer. FMN serves as cofactor.

The enzyme catalyses 2 a quinone + NADH + H(+) = 2 a 1,4-benzosemiquinone + NAD(+). It carries out the reaction N,N-dimethyl-1,4-phenylenediamine + anthranilate + 2 NAD(+) = 2-(4-dimethylaminophenyl)diazenylbenzoate + 2 NADH + 2 H(+). Its function is as follows. Quinone reductase that provides resistance to thiol-specific stress caused by electrophilic quinones. Also exhibits azoreductase activity. Catalyzes the reductive cleavage of the azo bond in aromatic azo compounds to the corresponding amines. This is FMN-dependent NADH:quinone oxidoreductase from Clostridium botulinum (strain Alaska E43 / Type E3).